A 178-amino-acid polypeptide reads, in one-letter code: Cell division protein SepF (178 aa).

Residues 19-45 (EHYESEHHTPHKDEDDSMEHDREERRA) are compositionally biased toward basic and acidic residues. The disordered stretch occupies residues 19 to 65 (EHYESEHHTPHKDEDDSMEHDREERRAPAPVREIARETPTPHAAEEE).

Belongs to the SepF family. As to quaternary structure, homodimer. Interacts with FtsZ.

It is found in the cytoplasm. Its function is as follows. Cell division protein that is part of the divisome complex and is recruited early to the Z-ring. Probably stimulates Z-ring formation, perhaps through the cross-linking of FtsZ protofilaments. Its function overlaps with FtsA. In Arthrobacter sp. (strain FB24), this protein is Cell division protein SepF.